The following is a 169-amino-acid chain: Adenine phosphoribosyltransferase (169 aa).

This sequence belongs to the purine/pyrimidine phosphoribosyltransferase family. As to quaternary structure, homodimer.

The protein resides in the cytoplasm. It catalyses the reaction AMP + diphosphate = 5-phospho-alpha-D-ribose 1-diphosphate + adenine. Its pathway is purine metabolism; AMP biosynthesis via salvage pathway; AMP from adenine: step 1/1. Catalyzes a salvage reaction resulting in the formation of AMP, that is energically less costly than de novo synthesis. This chain is Adenine phosphoribosyltransferase, found in Mycoplasmopsis synoviae (strain 53) (Mycoplasma synoviae).